The sequence spans 550 residues: Methionine--tRNA ligase (550 aa).

Residues 12 to 22 (PYANGPLHFGH) carry the 'HIGH' region motif. Positions 144, 147, 157, and 160 each coordinate Zn(2+). The 'KMSKS' region signature appears at 330 to 334 (QFSKS). Lys-333 provides a ligand contact to ATP.

The protein belongs to the class-I aminoacyl-tRNA synthetase family. MetG type 1 subfamily. Monomer. Zn(2+) serves as cofactor.

It localises to the cytoplasm. The catalysed reaction is tRNA(Met) + L-methionine + ATP = L-methionyl-tRNA(Met) + AMP + diphosphate. Functionally, is required not only for elongation of protein synthesis but also for the initiation of all mRNA translation through initiator tRNA(fMet) aminoacylation. This is Methionine--tRNA ligase from Chlamydia caviae (strain ATCC VR-813 / DSM 19441 / 03DC25 / GPIC) (Chlamydophila caviae).